A 557-amino-acid polypeptide reads, in one-letter code: Neurofilament light polypeptide (557 aa).

An N-acetylserine modification is found at S2. Residues 2-89 form a head region; the sequence is SSYSYDPYYT…KIVRTQEKAQ (88 aa). Positions 86–396 constitute an IF rod domain; the sequence is EKAQLQDLND…KLLEGEETRL (311 aa). The segment at 90 to 121 is coil 1A; sequence LQDLNDRFANFIERVHELEQRNKVLEAELLLL. The tract at residues 122-134 is linker 1; the sequence is RQKHNEPSRLRDL. The segment at 135–230 is coil 1B; the sequence is YEQEVRELRL…KVHEEELAQL (96 aa). The segment at 231–248 is linker 12; it reads QSQVQYAQISLEVEVAKP. The tract at residues 249–267 is coil 2A; the sequence is DLSSALRDIRAQYEKLAAK. The linker 2 stretch occupies residues 268 to 276; that stretch reads NMQSAEDWF. A coil 2B region spans residues 277 to 392; it reads KSRFTVLTQS…AAYRKLLEGE (116 aa). The interval 393–437 is tail, subdomain A; that stretch reads ETRLSFSGVGAITSGYTQSAPVFGRSAYSLQSSSYMTSRAFPTYY. The segment at 393–557 is tail; sequence ETRLSFSGVG…KKKKKKKKKK (165 aa). Positions 438-557 are tail, subdomain B (acidic); sequence SSHVQEEQLD…KKKKKKKKKK (120 aa). Positions 452 to 557 are disordered; the sequence is IESSRAEEAK…KKKKKKKKKK (106 aa). Basic and acidic residues predominate over residues 453-464; that stretch reads ESSRAEEAKAEA. A compositionally biased stretch (acidic residues) spans 465–538; the sequence is PEEEEEEAGE…GEGEEEEEGK (74 aa). A compositionally biased stretch (basic and acidic residues) spans 539–548; the sequence is GEEPAEEESK.

The protein belongs to the intermediate filament family. Forms homodimers (in vitro).

The protein localises to the cell projection. It is found in the axon. Its subcellular location is the cytoplasm. The protein resides in the cytoskeleton. Its function is as follows. Neurofilaments usually contain three intermediate filament proteins: NEFL, NEFM, and NEFH which are involved in the maintenance of neuronal caliber. May additionally cooperate with other neuronal intermediate filament proteins to form neuronal filamentous networks. The polypeptide is Neurofilament light polypeptide (nefl) (Xenopus tropicalis (Western clawed frog)).